A 389-amino-acid chain; its full sequence is Methylthioribose kinase (389 aa).

Residues N37, K52, and 106–108 (EDL) contribute to the ATP site. A substrate-binding site is contributed by D224. 241 to 243 (DPE) lines the ATP pocket. A substrate-binding site is contributed by R331.

It belongs to the methylthioribose kinase family. Homodimer.

The catalysed reaction is 5-(methylsulfanyl)-D-ribose + ATP = 5-(methylsulfanyl)-alpha-D-ribose 1-phosphate + ADP + H(+). The protein operates within amino-acid biosynthesis; L-methionine biosynthesis via salvage pathway; S-methyl-5-thio-alpha-D-ribose 1-phosphate from S-methyl-5'-thioadenosine (hydrolase route): step 2/2. In terms of biological role, catalyzes the phosphorylation of methylthioribose into methylthioribose-1-phosphate. This Exiguobacterium sibiricum (strain DSM 17290 / CCUG 55495 / CIP 109462 / JCM 13490 / 255-15) protein is Methylthioribose kinase.